The primary structure comprises 391 residues: Winged helix repair factor 1 (391 aa).

Low complexity-rich tracts occupy residues Met-1 to Ile-24 and Leu-49 to Asn-63. The tract at residues Met-1 to Thr-95 is disordered. A compositionally biased stretch (acidic residues) spans Gly-64 to Glu-74. Positions Asn-82 to Thr-95 are enriched in low complexity.

This sequence belongs to the STK19 family.

It localises to the nucleus. Its function is as follows. DNA-binding protein which is required for efficient transcription-coupled nucleotide excision repair. The polypeptide is Winged helix repair factor 1 (Dictyostelium discoideum (Social amoeba)).